We begin with the raw amino-acid sequence, 224 residues long: Phosphoribosylformylglycinamidine synthase subunit PurQ (224 aa).

Residues 4–224 form the Glutamine amidotransferase type-1 domain; that stretch reads RIGVITFPGT…YSALDSVLAS (221 aa). C87 serves as the catalytic Nucleophile. Catalysis depends on residues H195 and E197.

In terms of assembly, part of the FGAM synthase complex composed of 1 PurL, 1 PurQ and 2 PurS subunits.

The protein localises to the cytoplasm. It carries out the reaction N(2)-formyl-N(1)-(5-phospho-beta-D-ribosyl)glycinamide + L-glutamine + ATP + H2O = 2-formamido-N(1)-(5-O-phospho-beta-D-ribosyl)acetamidine + L-glutamate + ADP + phosphate + H(+). It catalyses the reaction L-glutamine + H2O = L-glutamate + NH4(+). It participates in purine metabolism; IMP biosynthesis via de novo pathway; 5-amino-1-(5-phospho-D-ribosyl)imidazole from N(2)-formyl-N(1)-(5-phospho-D-ribosyl)glycinamide: step 1/2. Part of the phosphoribosylformylglycinamidine synthase complex involved in the purines biosynthetic pathway. Catalyzes the ATP-dependent conversion of formylglycinamide ribonucleotide (FGAR) and glutamine to yield formylglycinamidine ribonucleotide (FGAM) and glutamate. The FGAM synthase complex is composed of three subunits. PurQ produces an ammonia molecule by converting glutamine to glutamate. PurL transfers the ammonia molecule to FGAR to form FGAM in an ATP-dependent manner. PurS interacts with PurQ and PurL and is thought to assist in the transfer of the ammonia molecule from PurQ to PurL. The chain is Phosphoribosylformylglycinamidine synthase subunit PurQ from Mycobacterium leprae (strain TN).